The chain runs to 388 residues: Reducing end xylose-releasing exo-oligoxylanase (388 aa).

Catalysis depends on glutamate 70, which acts as the Proton donor. The active-site Proton acceptor is the aspartate 263.

This sequence belongs to the glycosyl hydrolase 8 (cellulase D) family.

The enzyme catalyses Hydrolysis of (1-&gt;4)-beta-D-xylose residues from the reducing end of oligosaccharides.. Its function is as follows. Hydrolyzes xylooligosaccharides with a degree of polymerization of greater than or equal to 3, releasing xylose from the reducing end. Only hydrolyzes the beta anomers of xylooligosaccharides, with inversion of anomeric configuration. Hydrolyzes the glucose and xylose-based trisaccharides where xylose is located at the -1 subsite, GXX, XXG and GXG. Does not hydrolyze xylan, chitosan, lichenan, curdlan or carboxymethylcellulose. The protein is Reducing end xylose-releasing exo-oligoxylanase of Halalkalibacterium halodurans (strain ATCC BAA-125 / DSM 18197 / FERM 7344 / JCM 9153 / C-125) (Bacillus halodurans).